The sequence spans 325 residues: NADH-quinone oxidoreductase subunit H (325 aa).

The next 9 membrane-spanning stretches (helical) occupy residues 11-31 (ILLS…CGAF), 50-69 (NRVG…KMFF), 81-101 (VIFT…FAIV), 114-134 (IGIL…LFAG), 154-174 (VSYE…AGSF), 186-206 (LWNV…GVAV), 237-257 (FFVG…TLFF), 265-285 (LPPF…FILI), and 304-324 (VCLP…LWQA).

The protein belongs to the complex I subunit 1 family. In terms of assembly, NDH-1 is composed of 13 different subunits. Subunits NuoA, H, J, K, L, M, N constitute the membrane sector of the complex.

Its subcellular location is the cell inner membrane. The enzyme catalyses a quinone + NADH + 5 H(+)(in) = a quinol + NAD(+) + 4 H(+)(out). Functionally, NDH-1 shuttles electrons from NADH, via FMN and iron-sulfur (Fe-S) centers, to quinones in the respiratory chain. The immediate electron acceptor for the enzyme in this species is believed to be ubiquinone. Couples the redox reaction to proton translocation (for every two electrons transferred, four hydrogen ions are translocated across the cytoplasmic membrane), and thus conserves the redox energy in a proton gradient. This subunit may bind ubiquinone. The protein is NADH-quinone oxidoreductase subunit H of Salmonella agona (strain SL483).